The primary structure comprises 600 residues: UvrABC system protein C (600 aa).

Residues 15 to 100 (NSAGVYEYFN…IKQLHPKYNI (86 aa)) form the GIY-YIG domain. Positions 203-238 (SVLLKNLEKQMLVLAQNENYEEAAKIRDQIATIKDL) constitute a UVR domain.

Belongs to the UvrC family. Interacts with UvrB in an incision complex.

The protein localises to the cytoplasm. Its function is as follows. The UvrABC repair system catalyzes the recognition and processing of DNA lesions. UvrC both incises the 5' and 3' sides of the lesion. The N-terminal half is responsible for the 3' incision and the C-terminal half is responsible for the 5' incision. This Campylobacter jejuni subsp. doylei (strain ATCC BAA-1458 / RM4099 / 269.97) protein is UvrABC system protein C.